A 349-amino-acid polypeptide reads, in one-letter code: UDP-3-O-acylglucosamine N-acyltransferase 1 (349 aa).

Histidine 241 serves as the catalytic Proton acceptor.

Belongs to the transferase hexapeptide repeat family. LpxD subfamily. In terms of assembly, homotrimer.

It catalyses the reaction a UDP-3-O-[(3R)-3-hydroxyacyl]-alpha-D-glucosamine + a (3R)-hydroxyacyl-[ACP] = a UDP-2-N,3-O-bis[(3R)-3-hydroxyacyl]-alpha-D-glucosamine + holo-[ACP] + H(+). The protein operates within bacterial outer membrane biogenesis; LPS lipid A biosynthesis. Functionally, catalyzes the N-acylation of UDP-3-O-acylglucosamine using 3-hydroxyacyl-ACP as the acyl donor. Is involved in the biosynthesis of lipid A, a phosphorylated glycolipid that anchors the lipopolysaccharide to the outer membrane of the cell. The polypeptide is UDP-3-O-acylglucosamine N-acyltransferase 1 (Gloeobacter violaceus (strain ATCC 29082 / PCC 7421)).